Reading from the N-terminus, the 858-residue chain is Leucine--tRNA ligase (858 aa).

The 'HIGH' region motif lies at 42–52 (PYPSGRLHMGH). Residues 618 to 622 (KMSKS) carry the 'KMSKS' region motif. K621 contributes to the ATP binding site.

The protein belongs to the class-I aminoacyl-tRNA synthetase family.

It is found in the cytoplasm. It catalyses the reaction tRNA(Leu) + L-leucine + ATP = L-leucyl-tRNA(Leu) + AMP + diphosphate. This Aliivibrio salmonicida (strain LFI1238) (Vibrio salmonicida (strain LFI1238)) protein is Leucine--tRNA ligase.